Consider the following 473-residue polypeptide: Adenosylhomocysteinase (473 aa).

Positions 60, 135, and 197 each coordinate substrate. 198-200 (TTT) is an NAD(+) binding site. Substrate is bound by residues Lys227 and Asp231. NAD(+)-binding positions include Asn232, 261 to 266 (GFGDVG), Glu284, Asn319, 340 to 342 (IGH), and Asn385.

It belongs to the adenosylhomocysteinase family. Requires NAD(+) as cofactor.

Its subcellular location is the cytoplasm. The enzyme catalyses S-adenosyl-L-homocysteine + H2O = L-homocysteine + adenosine. It functions in the pathway amino-acid biosynthesis; L-homocysteine biosynthesis; L-homocysteine from S-adenosyl-L-homocysteine: step 1/1. Functionally, may play a key role in the regulation of the intracellular concentration of adenosylhomocysteine. The polypeptide is Adenosylhomocysteinase (Bradyrhizobium sp. (strain BTAi1 / ATCC BAA-1182)).